Here is a 156-residue protein sequence, read N- to C-terminus: SsrA-binding protein (156 aa).

A disordered region spans residues 130 to 156 (KFDKRDDLKKKDAKRDIDRALRDKQKY). Over residues 132–156 (DKRDDLKKKDAKRDIDRALRDKQKY) the composition is skewed to basic and acidic residues.

Belongs to the SmpB family.

The protein localises to the cytoplasm. In terms of biological role, required for rescue of stalled ribosomes mediated by trans-translation. Binds to transfer-messenger RNA (tmRNA), required for stable association of tmRNA with ribosomes. tmRNA and SmpB together mimic tRNA shape, replacing the anticodon stem-loop with SmpB. tmRNA is encoded by the ssrA gene; the 2 termini fold to resemble tRNA(Ala) and it encodes a 'tag peptide', a short internal open reading frame. During trans-translation Ala-aminoacylated tmRNA acts like a tRNA, entering the A-site of stalled ribosomes, displacing the stalled mRNA. The ribosome then switches to translate the ORF on the tmRNA; the nascent peptide is terminated with the 'tag peptide' encoded by the tmRNA and targeted for degradation. The ribosome is freed to recommence translation, which seems to be the essential function of trans-translation. The chain is SsrA-binding protein from Exiguobacterium sibiricum (strain DSM 17290 / CCUG 55495 / CIP 109462 / JCM 13490 / 255-15).